Consider the following 178-residue polypeptide: Large ribosomal subunit protein uL6 (178 aa).

This sequence belongs to the universal ribosomal protein uL6 family. As to quaternary structure, part of the 50S ribosomal subunit.

Its function is as follows. This protein binds to the 23S rRNA, and is important in its secondary structure. It is located near the subunit interface in the base of the L7/L12 stalk, and near the tRNA binding site of the peptidyltransferase center. This is Large ribosomal subunit protein uL6 from Levilactobacillus brevis (strain ATCC 367 / BCRC 12310 / CIP 105137 / JCM 1170 / LMG 11437 / NCIMB 947 / NCTC 947) (Lactobacillus brevis).